The primary structure comprises 400 residues: Double C2-like domain-containing protein alpha (400 aa).

The segment at Met-1–Ala-89 is interaction with UNC13D and DYNLT1. 2 consecutive C2 domains span residues Ala-89–Ile-211 and Glu-251–His-384. Ca(2+) contacts are provided by Asp-120, Asp-126, Asp-181, Asp-183, Asp-282, Asp-288, Asp-342, Asp-344, and Asp-350. Residues Arg-215–Ala-400 are interaction with UNC13D.

Interacts (via N-terminus) with UNC13A. Interacts with cytoplasmic dynein light chain DYNLT1. Interacts with UNC13D. It depends on Ca(2+) as a cofactor. In terms of tissue distribution, predominantly expressed in brain. Also expressed in testis.

Its subcellular location is the lysosome. It localises to the cytoplasmic vesicle. It is found in the secretory vesicle. The protein resides in the synaptic vesicle membrane. The protein localises to the synapse. Its subcellular location is the synaptosome. In terms of biological role, calcium sensor which most probably regulates fusion of vesicles with membranes. Binds calcium and phospholipids. May be involved in calcium dependent neurotransmitter release through the interaction with UNC13A. May be involved in calcium-dependent spontaneous release of neurotransmitter in absence of action potentials in neuronal cells. Regulates Ca(2+)-dependent secretory lysosome exocytosis in mast cells. The chain is Double C2-like domain-containing protein alpha (DOC2A) from Homo sapiens (Human).